We begin with the raw amino-acid sequence, 868 residues long: Metabotropic glutamate receptor 6 (868 aa).

The first 20 residues, 1–20 (MARLLLALLAWLAQMSPVRA), serve as a signal peptide directing secretion. The Extracellular portion of the chain corresponds to 21-576 (AGSVRLAGGL…VVRLTWSSPW (556 aa)). C48 and C90 are joined by a disulfide. L-glutamate-binding positions include S145, 166 to 168 (AST), and Y216. 7 disulfides stabilise this stretch: C235–C527, C358–C374, C414–C421, C509–C528, C513–C531, C534–C546, and C549–C562. N-linked (GlcNAc...) asparagine glycosylation occurs at N287. D298 serves as a coordination point for L-glutamate. K391 lines the L-glutamate pocket. N-linked (GlcNAc...) asparagine glycans are attached at residues N442 and N470. Residue N558 is glycosylated (N-linked (GlcNAc...) asparagine). Residues 577–599 (AAPPLLLAVLGIMATTTVVGTFV) traverse the membrane as a helical segment. Residues 600–613 (RHNNTPIVRASGRE) lie on the Cytoplasmic side of the membrane. A helical transmembrane segment spans residues 614–634 (LSYVLLTGIFLIYAVTFLMVA). Residues 635-645 (EPGAAVCATRR) are Extracellular-facing. Residues 646–664 (LFLGLGTTLSYSALLTKTN) form a helical membrane-spanning segment. The Cytoplasmic segment spans residues 665–688 (RIYRIFEQGKRSVTPPPFISPTSQ). A helical membrane pass occupies residues 689-709 (LVITFSLTSLQVVGVIAWLGA). The Extracellular segment spans residues 710–739 (QPPHSVIDYEEQRTVDPEQARGVLKCDMSD). Residues 740 to 761 (LSLIGCLGYSLLLMVTCTVYAI) form a helical membrane-spanning segment. Residues 762–774 (KARGVPETFNEAK) lie on the Cytoplasmic side of the membrane. Residues 775–797 (PIGFTMYTTCIVWLAFVPIFFGT) form a helical membrane-spanning segment. Residues 798 to 810 (AQSAEKIYIQTTT) are Extracellular-facing. A helical transmembrane segment spans residues 811-836 (LTVSLSLSASVSLGMLYVPKTYVILF). Over 837 to 868 (HPEQNVQKRKRSLKTTSTVAAPPKGADTEDPK) the chain is Cytoplasmic. A disordered region spans residues 845–868 (RKRSLKTTSTVAAPPKGADTEDPK).

It belongs to the G-protein coupled receptor 3 family. In terms of assembly, homodimer. Interacts with GPR179. Interacts with photoreceptor synaptic protein LRIT1 (via its N-terminal extracellular domain).

Its subcellular location is the cell membrane. The protein localises to the endoplasmic reticulum membrane. It is found in the golgi apparatus membrane. It localises to the cell projection. The protein resides in the dendrite. Its function is as follows. G-protein coupled receptor for glutamate. Ligand binding causes a conformation change that triggers signaling via guanine nucleotide-binding proteins (G proteins) and modulates the activity of down-stream effectors, such as adenylate cyclase. Signaling inhibits adenylate cyclase activity. Signaling stimulates TRPM1 channel activity and Ca(2+) uptake. Required for normal vision. The protein is Metabotropic glutamate receptor 6 (GRM6) of Oryctolagus cuniculus (Rabbit).